The primary structure comprises 353 residues: Holliday junction branch migration complex subunit RuvB (353 aa).

The tract at residues 4–185 (ADRLITAVGG…FGIVQRLEFY (182 aa)) is large ATPase domain (RuvB-L). Residues Ile-24, Arg-25, Gly-66, Lys-69, Thr-70, Thr-71, 132 to 134 (EDF), Arg-175, Tyr-185, and Arg-222 each bind ATP. Thr-70 is a Mg(2+) binding site. The segment at 186–256 (NIADLSTIVA…TADKALNLLD (71 aa)) is small ATPAse domain (RuvB-S). Residues 259–353 (EHGFDHQDRR…GEFVDDAADL (95 aa)) form a head domain (RuvB-H) region. Arg-295, Arg-314, and Arg-319 together coordinate DNA.

This sequence belongs to the RuvB family. As to quaternary structure, homohexamer. Forms an RuvA(8)-RuvB(12)-Holliday junction (HJ) complex. HJ DNA is sandwiched between 2 RuvA tetramers; dsDNA enters through RuvA and exits via RuvB. An RuvB hexamer assembles on each DNA strand where it exits the tetramer. Each RuvB hexamer is contacted by two RuvA subunits (via domain III) on 2 adjacent RuvB subunits; this complex drives branch migration. In the full resolvosome a probable DNA-RuvA(4)-RuvB(12)-RuvC(2) complex forms which resolves the HJ.

The protein resides in the cytoplasm. It catalyses the reaction ATP + H2O = ADP + phosphate + H(+). Functionally, the RuvA-RuvB-RuvC complex processes Holliday junction (HJ) DNA during genetic recombination and DNA repair, while the RuvA-RuvB complex plays an important role in the rescue of blocked DNA replication forks via replication fork reversal (RFR). RuvA specifically binds to HJ cruciform DNA, conferring on it an open structure. The RuvB hexamer acts as an ATP-dependent pump, pulling dsDNA into and through the RuvAB complex. RuvB forms 2 homohexamers on either side of HJ DNA bound by 1 or 2 RuvA tetramers; 4 subunits per hexamer contact DNA at a time. Coordinated motions by a converter formed by DNA-disengaged RuvB subunits stimulates ATP hydrolysis and nucleotide exchange. Immobilization of the converter enables RuvB to convert the ATP-contained energy into a lever motion, pulling 2 nucleotides of DNA out of the RuvA tetramer per ATP hydrolyzed, thus driving DNA branch migration. The RuvB motors rotate together with the DNA substrate, which together with the progressing nucleotide cycle form the mechanistic basis for DNA recombination by continuous HJ branch migration. Branch migration allows RuvC to scan DNA until it finds its consensus sequence, where it cleaves and resolves cruciform DNA. The polypeptide is Holliday junction branch migration complex subunit RuvB (Pseudomonas syringae pv. tomato (strain ATCC BAA-871 / DC3000)).